A 633-amino-acid polypeptide reads, in one-letter code: 1-deoxy-D-xylulose-5-phosphate synthase (633 aa).

Thiamine diphosphate contacts are provided by residues His-72 and 113-115 (GHS). Asp-144 is a binding site for Mg(2+). Thiamine diphosphate contacts are provided by residues 145–146 (GA), Asn-173, Tyr-284, and Glu-367. Asn-173 contacts Mg(2+).

Belongs to the transketolase family. DXPS subfamily. Homodimer. Mg(2+) serves as cofactor. Thiamine diphosphate is required as a cofactor.

It carries out the reaction D-glyceraldehyde 3-phosphate + pyruvate + H(+) = 1-deoxy-D-xylulose 5-phosphate + CO2. The protein operates within metabolic intermediate biosynthesis; 1-deoxy-D-xylulose 5-phosphate biosynthesis; 1-deoxy-D-xylulose 5-phosphate from D-glyceraldehyde 3-phosphate and pyruvate: step 1/1. Catalyzes the acyloin condensation reaction between C atoms 2 and 3 of pyruvate and glyceraldehyde 3-phosphate to yield 1-deoxy-D-xylulose-5-phosphate (DXP). The protein is 1-deoxy-D-xylulose-5-phosphate synthase of Lysinibacillus sphaericus (strain C3-41).